We begin with the raw amino-acid sequence, 335 residues long: Holliday junction branch migration complex subunit RuvB (335 aa).

The segment at 1–183 is large ATPase domain (RuvB-L); that stretch reads MDERIISSET…FGVIDHLEFY (183 aa). ATP is bound by residues leucine 22, arginine 23, glycine 64, lysine 67, threonine 68, threonine 69, 130-132, arginine 173, tyrosine 183, and arginine 220; that span reads EDY. Position 68 (threonine 68) interacts with Mg(2+). A small ATPAse domain (RuvB-S) region spans residues 184–254; sequence TEEQLTEIVL…LAKEALTLLQ (71 aa). Positions 257–335 are head domain (RuvB-H); sequence PRGLDTIDQK…HLGISYEKEV (79 aa). 3 residues coordinate DNA: arginine 293, arginine 312, and arginine 317.

Belongs to the RuvB family. As to quaternary structure, homohexamer. Forms an RuvA(8)-RuvB(12)-Holliday junction (HJ) complex. HJ DNA is sandwiched between 2 RuvA tetramers; dsDNA enters through RuvA and exits via RuvB. An RuvB hexamer assembles on each DNA strand where it exits the tetramer. Each RuvB hexamer is contacted by two RuvA subunits (via domain III) on 2 adjacent RuvB subunits; this complex drives branch migration. In the full resolvosome a probable DNA-RuvA(4)-RuvB(12)-RuvC(2) complex forms which resolves the HJ.

It localises to the cytoplasm. It catalyses the reaction ATP + H2O = ADP + phosphate + H(+). Its function is as follows. The RuvA-RuvB-RuvC complex processes Holliday junction (HJ) DNA during genetic recombination and DNA repair, while the RuvA-RuvB complex plays an important role in the rescue of blocked DNA replication forks via replication fork reversal (RFR). RuvA specifically binds to HJ cruciform DNA, conferring on it an open structure. The RuvB hexamer acts as an ATP-dependent pump, pulling dsDNA into and through the RuvAB complex. RuvB forms 2 homohexamers on either side of HJ DNA bound by 1 or 2 RuvA tetramers; 4 subunits per hexamer contact DNA at a time. Coordinated motions by a converter formed by DNA-disengaged RuvB subunits stimulates ATP hydrolysis and nucleotide exchange. Immobilization of the converter enables RuvB to convert the ATP-contained energy into a lever motion, pulling 2 nucleotides of DNA out of the RuvA tetramer per ATP hydrolyzed, thus driving DNA branch migration. The RuvB motors rotate together with the DNA substrate, which together with the progressing nucleotide cycle form the mechanistic basis for DNA recombination by continuous HJ branch migration. Branch migration allows RuvC to scan DNA until it finds its consensus sequence, where it cleaves and resolves cruciform DNA. The chain is Holliday junction branch migration complex subunit RuvB from Listeria monocytogenes serotype 4b (strain CLIP80459).